The primary structure comprises 90 residues: Serine-rich and transmembrane domain-containing 2 (90 aa).

Residue Asn11 is glycosylated (N-linked (GlcNAc...) asparagine). Residues 38–58 (YVGLFLSLLAILLILLFTMLL) traverse the membrane as a helical segment. The interval 69-90 (SDSTESVPQFTDVEMQSRIPTP) is disordered.

The protein resides in the membrane. In Homo sapiens (Human), this protein is Serine-rich and transmembrane domain-containing 2.